The sequence spans 154 residues: Nucleoside diphosphate kinase A2 (154 aa).

Lys13, Phe61, Arg89, Thr95, Arg106, and Asn116 together coordinate ATP. His119 functions as the Pros-phosphohistidine intermediate in the catalytic mechanism.

This sequence belongs to the NDK family. It depends on Mg(2+) as a cofactor.

It localises to the cytoplasm. It carries out the reaction a 2'-deoxyribonucleoside 5'-diphosphate + ATP = a 2'-deoxyribonucleoside 5'-triphosphate + ADP. The catalysed reaction is a ribonucleoside 5'-diphosphate + ATP = a ribonucleoside 5'-triphosphate + ADP. Its function is as follows. Major role in the synthesis of nucleoside triphosphates other than ATP. The ATP gamma phosphate is transferred to the NDP beta phosphate via a ping-pong mechanism, using a phosphorylated active-site intermediate. This is Nucleoside diphosphate kinase A2 from Xenopus laevis (African clawed frog).